Here is a 122-residue protein sequence, read N- to C-terminus: Large ribosomal subunit protein uL14 (122 aa).

It belongs to the universal ribosomal protein uL14 family. Part of the 50S ribosomal subunit. Forms a cluster with proteins L3 and L19. In the 70S ribosome, L14 and L19 interact and together make contacts with the 16S rRNA in bridges B5 and B8.

Its function is as follows. Binds to 23S rRNA. Forms part of two intersubunit bridges in the 70S ribosome. In Saccharopolyspora erythraea (strain ATCC 11635 / DSM 40517 / JCM 4748 / NBRC 13426 / NCIMB 8594 / NRRL 2338), this protein is Large ribosomal subunit protein uL14.